We begin with the raw amino-acid sequence, 1500 residues long: Secreted chitinase LysM12 (1500 aa).

An N-terminal signal peptide occupies residues 1-23; sequence MAPLWNGMAAGLLLSAAVVSGQA. Residues Asn53, Asn225, Asn251, and Asn270 are each glycosylated (N-linked (GlcNAc...) asparagine). LysM domains follow at residues 303 to 348 and 367 to 415; these read RTQK…HVCC and ATTT…VICI. One can recognise a Chitin-binding type-1 domain in the interval 428–496; the sequence is DAECGPQVPG…TNGCISHCGM (69 aa). 4 disulfide bridges follow: Cys431–Cys459, Cys453–Cys465, Cys458–Cys472, and Cys490–Cys494. One can recognise a GH18 domain in the interval 507 to 879; that stretch reads FRSVGYYESY…PGMILQMKSG (373 aa). Catalysis depends on Glu625, which acts as the Proton donor. Tyr626 provides a ligand contact to chitin. Residues Asn721 and Asn800 are each glycosylated (N-linked (GlcNAc...) asparagine). Trp852 contacts chitin. Residues Asn892 and Asn983 are each glycosylated (N-linked (GlcNAc...) asparagine). A disordered region spans residues 1164-1193; that stretch reads IPKDIPYPDKTKRKDKDDDDNKKTEATDSE. Over residues 1169–1193 the composition is skewed to basic and acidic residues; the sequence is PYPDKTKRKDKDDDDNKKTEATDSE.

The protein belongs to the glycosyl hydrolase 18 family. Chitinase class V subfamily.

The protein localises to the secreted. It carries out the reaction Random endo-hydrolysis of N-acetyl-beta-D-glucosaminide (1-&gt;4)-beta-linkages in chitin and chitodextrins.. Secreted chitinase involved in the degradation of chitin, a component of the cell walls of fungi and exoskeletal elements of some animals (including worms and arthropods). Involved in pathogenesis via manipulation of host defenses for successful infection. This chain is Secreted chitinase LysM12, found in Penicillium expansum (Blue mold rot fungus).